We begin with the raw amino-acid sequence, 416 residues long: Probable carboxypeptidase An18g06210 (416 aa).

The signal sequence occupies residues 1 to 16 (MKSPISLLAAVGVASA). Asn54, Asn70, and Asn129 each carry an N-linked (GlcNAc...) asparagine glycan. Asp142 lines the Zn(2+) pocket. Glu174 acts as the Proton acceptor in catalysis. Glu175 contacts Zn(2+). Asn187 and Asn319 each carry an N-linked (GlcNAc...) asparagine glycan.

This sequence belongs to the peptidase M20A family. The cofactor is Zn(2+).

It is found in the secreted. The chain is Probable carboxypeptidase An18g06210 from Aspergillus niger (strain ATCC MYA-4892 / CBS 513.88 / FGSC A1513).